The following is an 85-amino-acid chain: MAHKKAGGSTRNGRDSEAKRLGVKRFGGESVLAGSIIVRQRGTKFHAGNNVGCGRDHTLFAKADGKVKFEVKGPNNRKYISIVAE.

Positions 1-20 (MAHKKAGGSTRNGRDSEAKR) are disordered.

It belongs to the bacterial ribosomal protein bL27 family.

This Cronobacter sakazakii (strain ATCC BAA-894) (Enterobacter sakazakii) protein is Large ribosomal subunit protein bL27.